Here is a 396-residue protein sequence, read N- to C-terminus: Probable sugar efflux transporter (396 aa).

The next 12 membrane-spanning stretches (helical) occupy residues 15–35, 50–70, 81–101, 103–123, 136–156, 170–190, 209–229, 246–266, 275–295, 299–319, 333–353, and 364–384; these read VVTLAVAAFIFNTTEFVPVGL, VGIMLTIYAWVVALMSLPFML, LICLFVVFIASHVLSFLSWSF, VLVISRIGVAFAHAIFWSITA, AQALSLIATGTALAMVLGLPL, FFAIGIGALITLLCLIKLLPL, PALMSIYLLTVVVVTAHYTAY, FATALLLLLGGAGIIGSVIFG, ALVSTAIALLLVCLALLLPAA, IHLGVLSIFWGIAMMIIGLGM, VAMALFSGIFNIGIGAGALVG, and MIGYVGAVPAFAALIWSIIIF.

Belongs to the major facilitator superfamily. SotB (TC 2.A.1.2) family.

It is found in the cell inner membrane. Functionally, involved in the efflux of sugars. The physiological role may be the reduction of the intracellular concentration of toxic sugars or sugar metabolites. This Escherichia coli O127:H6 (strain E2348/69 / EPEC) protein is Probable sugar efflux transporter.